A 246-amino-acid polypeptide reads, in one-letter code: UDP-N-acetyl-D-mannosaminuronic acid transferase (246 aa).

Belongs to the glycosyltransferase 26 family.

The catalysed reaction is UDP-N-acetyl-alpha-D-mannosaminouronate + N-acetyl-alpha-D-glucosaminyl-di-trans,octa-cis-undecaprenyl diphosphate = beta-D-ManNAcA-(1-&gt;4)-alpha-D-GlcNAc-di-trans,octa-cis-undecaprenyl diphosphate + UDP + H(+). It participates in bacterial outer membrane biogenesis; enterobacterial common antigen biosynthesis. Its function is as follows. Catalyzes the synthesis of Und-PP-GlcNAc-ManNAcA (Lipid II), the second lipid-linked intermediate involved in enterobacterial common antigen (ECA) synthesis. The sequence is that of UDP-N-acetyl-D-mannosaminuronic acid transferase from Citrobacter koseri (strain ATCC BAA-895 / CDC 4225-83 / SGSC4696).